The primary structure comprises 151 residues: MLKEFKEFAMKGNVVDMAVGIIVGGAFGTIVNTLVSQVLMPPLGLLIGGVDFTNLYLILKEGSKAAAPYAALADATAAGAVTVNYGLFLNSVISFLIMAFAVFLLVKAINMLRREEKAPPLAPTTKECPYCLSIVPLKATRCSSCTSELGK.

The next 3 membrane-spanning stretches (helical) occupy residues 14–34, 38–58, and 86–106; these read VVDMAVGIIVGGAFGTIVNTL, VLMPPLGLLIGGVDFTNLYLI, and GLFLNSVISFLIMAFAVFLLV.

The protein belongs to the MscL family. As to quaternary structure, homopentamer.

The protein resides in the cell inner membrane. Channel that opens in response to stretch forces in the membrane lipid bilayer. May participate in the regulation of osmotic pressure changes within the cell. This Pelodictyon phaeoclathratiforme (strain DSM 5477 / BU-1) protein is Large-conductance mechanosensitive channel.